Reading from the N-terminus, the 247-residue chain is MLVLPAIDLLDNEAVRLLQGDYSKKTVYSSSPEKMIQVFEEQGATLIHIVDLNAAKTGKSENEKTIKKIKEKCTVDLELGGGIRTIDNMKFYDGLGVSRLILGTVAVEEPNVVEKAVSLFGQDRIVIGVDAKNGYVRTKGWESNSGILYKDFLTTMYGMGIRHVIFTDIARDGMMEGPNTLAYAELLETFPDLQLVASGGVSSKEDLVELYDKTNGKLFGAITGKAIYEGKLDLKESIRILNQKREK.

D8 (proton acceptor) is an active-site residue. D130 acts as the Proton donor in catalysis.

It belongs to the HisA/HisF family.

The protein resides in the cytoplasm. It carries out the reaction 1-(5-phospho-beta-D-ribosyl)-5-[(5-phospho-beta-D-ribosylamino)methylideneamino]imidazole-4-carboxamide = 5-[(5-phospho-1-deoxy-D-ribulos-1-ylimino)methylamino]-1-(5-phospho-beta-D-ribosyl)imidazole-4-carboxamide. The protein operates within amino-acid biosynthesis; L-histidine biosynthesis; L-histidine from 5-phospho-alpha-D-ribose 1-diphosphate: step 4/9. The polypeptide is 1-(5-phosphoribosyl)-5-[(5-phosphoribosylamino)methylideneamino] imidazole-4-carboxamide isomerase (Leptospira biflexa serovar Patoc (strain Patoc 1 / Ames)).